The sequence spans 257 residues: MTPSEFRQSVRRGAFRGPTAGHCGPFAQANLAILPDAYAHDFLRFCQANPKACPLLGVGEPGAFRIDALGDDLDIRTDVPSYNVYRDGRLTERVESLDALWRDDFVVFAIGCSFSFEDMLAREGIGLRHVEEGCNVPMYRTSIANRRAGIFGGQLVVSMRPLRGADAIRAVQITSRFPGVHGAPIHIGDPRALGIEDLNAPEFGDAVTIRDGELPVFWACGVTPQTALMDAKLPIAIAHTPGHMLMTDITNASLAVF.

This sequence belongs to the D-glutamate cyclase family.

The polypeptide is Putative hydro-lyase Bcen2424_3550 (Burkholderia cenocepacia (strain HI2424)).